The sequence spans 215 residues: Oligoribonuclease (215 aa).

Residues 5–170 enclose the Exonuclease domain; that stretch reads LVWIDCEMTG…ADIHESIREL (166 aa). The active site involves Y127.

The protein belongs to the oligoribonuclease family.

The protein resides in the cytoplasm. Its function is as follows. 3'-to-5' exoribonuclease specific for small oligoribonucleotides. This chain is Oligoribonuclease, found in Mycobacterium leprae (strain TN).